We begin with the raw amino-acid sequence, 708 residues long: Leukotoxin translocation ATP-binding protein LktB (708 aa).

The Peptidase C39 domain occupies 1–126 (MEANHQRNDL…ACYQGQLILV (126 aa)). Positions 155 to 437 (FLETLIVSIF…LAQLWQDFQQ (283 aa)) constitute an ABC transmembrane type-1 domain. A run of 5 helical transmembrane segments spans residues 159 to 179 (LIVS…FQVV), 192 to 212 (LNII…LSGL), 270 to 290 (ALTS…MWYY), 296 to 316 (LVIL…SPIL), and 389 to 409 (VMVI…LSIG). The ABC transporter domain maps to 469 to 704 (ISFKNIRFRY…SNGLYSYLHQ (236 aa)). 503 to 510 (GRSGSGKS) serves as a coordination point for ATP.

This sequence belongs to the ABC transporter superfamily. Protein-1 exporter (TC 3.A.1.109) family. In terms of assembly, homodimer.

The protein resides in the cell inner membrane. It carries out the reaction ATP + H2O + proteinSide 1 = ADP + phosphate + proteinSide 2.. In terms of biological role, part of the ABC transporter complex LktBD involved in leukotoxin export. Transmembrane domains (TMD) form a pore in the inner membrane and the ATP-binding domain (NBD) is responsible for energy generation. This chain is Leukotoxin translocation ATP-binding protein LktB (lktB), found in Mannheimia haemolytica (Pasteurella haemolytica).